The primary structure comprises 69 residues: MNTKFILILLVLIISTIFVNSQSLNVEVNDNTKDVQDWHDACKVITDEPMCLAFIQHCEWTKGHCKAWL.

An N-terminal signal peptide occupies residues Met-1–Ser-21.

It is found in the secreted. This is an uncharacterized protein from Dictyostelium discoideum (Social amoeba).